A 112-amino-acid polypeptide reads, in one-letter code: Beta-defensin 126 (112 aa).

The N-terminal stretch at 1 to 20 (MKSLLFTLAVFMLLAQLVSG) is a signal peptide. The in vitro binds to LPS, mediates antimicrobial activity and inhibits LPS-mediated inflammation stretch occupies residues 21–63 (NWYVKKCLNDVGICKKKCKPEELHVKNGRAMCGKQRDCCVPAD). Intrachain disulfides connect C27-C58, C34-C52, and C38-C59.

It belongs to the beta-defensin family. As to quaternary structure, homodimer or homooligomer; disulfide-linked. In terms of processing, O-glycosylated; glycans contain alpha(2,3)-linked sialic acids.

Its subcellular location is the secreted. In terms of biological role, highly glycosylated atypical beta-defensin involved in several aspects of sperm function. Facilitates sperm transport in the female reproductive tract and contributes to sperm protection against immunodetection; both functions are probably implicating the negative surface charge provided by its O-linked oligosaccharides in the sperm glycocalyx. Involved in binding of sperm to oviductal epithelial cells to form a sperm reservoir until ovulation. Release from the sperm surface during capacitation and ovaluation by an elevation of oviductal fluid pH is unmasking other surface components and allows sperm to penetrate the cumulus matrix and bind to the zona pellucida of the oocyte. In vitro has antimicrobial activity and may inhibit LPS-mediated inflammation. The chain is Beta-defensin 126 (DEFB126) from Hylobates lar (Lar gibbon).